Here is a 590-residue protein sequence, read N- to C-terminus: 2-hydroxyacyl-CoA lyase (590 aa).

2-hydroxyisobutanoyl-CoA contacts are provided by residues Gly43, Gln128, Gln255, 273-274, and Arg362; that span reads RS. Thiamine diphosphate is bound at residue 410–412; sequence GDL. Residue Arg417 participates in 2-hydroxyisobutanoyl-CoA binding. Gly433 lines the thiamine diphosphate pocket. Residue Asp460 participates in Mg(2+) binding. Residues 461 to 462 and 487 to 492 each bind thiamine diphosphate; these read GA and NRAWNI. Positions 487 and 489 each coordinate Mg(2+). Glu493 functions as the Proton acceptor in the catalytic mechanism. 561–564 lines the 2-hydroxyisobutanoyl-CoA pocket; sequence DSGK. The tract at residues 566-590 is C-terminal lid; sequence LGFVPDYQALTPWNDAEVARRQEGI.

The protein belongs to the TPP enzyme family. A homotetramer formed by a dimer of dimers; active sites are located in the dimer interface. Mg(2+) serves as cofactor. Requires thiamine diphosphate as cofactor.

It catalyses the reaction 2-hydroxyisobutanoyl-CoA = formyl-CoA + acetone. Activity is stimulated by thiamine diphosphate. A lyase that reversibly degrades 2-hydroxyisobutyryl-CoA (2-HIB-CoA) to acetone and formyl-CoA. Probably also cleaves 2-hydroxy-2-methylbutyryl-CoA to butanone and formyl-CoA. Does not act on 2-hydroxy-2-ethylbutyryl-CoA. A C-terminal lid closes the active site upon substrate binding, and with residues Leu-127 and Ile-492 restricts the size of the active site cavity so it can only use short-chain (C4 and C5) acyl substrates. Part of a pathway that allows cells to grow on 2-methylpropane-1,2-diol or 2-hydroxyisobutyric acid (2-HIBA) as a sole carbon source. This chain is 2-hydroxyacyl-CoA lyase, found in Actinomycetospora chiangmaiensis (strain DSM 45062 / JCM 15998 / CCTCC AA 205017 / NBRC 104400 / YIM 0006).